The sequence spans 391 residues: Processive diacylglycerol beta-glucosyltransferase (391 aa).

It belongs to the glycosyltransferase 28 family. UgtP subfamily.

The protein localises to the cell membrane. It catalyses the reaction a 1,2-diacyl-3-O-(beta-D-glucopyranosyl)-sn-glycerol + UDP-alpha-D-glucose = a 1,2-diacyl-3-O-(beta-D-Glc-(1-&gt;6)-beta-D-Glc)-sn-glycerol + UDP + H(+). The enzyme catalyses a 1,2-diacyl-sn-glycerol + UDP-alpha-D-glucose = a 1,2-diacyl-3-O-(beta-D-glucopyranosyl)-sn-glycerol + UDP + H(+). The protein operates within glycolipid metabolism; diglucosyl-diacylglycerol biosynthesis. Processive glucosyltransferase involved in the biosynthesis of both the bilayer- and non-bilayer-forming membrane glucolipids. Is able to successively transfer two glucosyl residues to diacylglycerol (DAG), thereby catalyzing the formation of beta-monoglucosyl-DAG (3-O-(beta-D-glucopyranosyl)-1,2-diacyl-sn-glycerol) and beta-diglucosyl-DAG (3-O-(beta-D-glucopyranosyl-beta-(1-&gt;6)-D-glucopyranosyl)-1,2-diacyl-sn-glycerol). Beta-diglucosyl-DAG is the predominant glycolipid found in Bacillales and is also used as a membrane anchor for lipoteichoic acid (LTA). The sequence is that of Processive diacylglycerol beta-glucosyltransferase from Staphylococcus aureus (strain MRSA252).